Consider the following 584-residue polypeptide: Negative regulator of RAS-cAMP pathway (584 aa).

Threonine 25 is subject to Phosphothreonine. Disordered stretches follow at residues 95–167, 209–279, 291–320, 343–366, and 381–432; these read PIKP…STTS, PLQS…SKTS, SEDE…DDYN, NLDS…HDPV, and SNSN…SLKT. Polar residues-rich tracts occupy residues 114–127, 229–254, and 267–278; these read PPTT…TRPM, CIDN…SFPQ, and NDQNGQLSLSKT. A phosphoserine mark is found at serine 247 and serine 276. The span at 307–320 shows a compositional bias: acidic residues; that stretch reads FYADEDDEEYDDYN. A compositionally biased stretch (polar residues) spans 343–363; sequence NLDSTKSSVSSANTINSNTSH. Over residues 381–392 the composition is skewed to low complexity; sequence SNSNNHNTAHSE. The span at 398–432 shows a compositional bias: polar residues; that stretch reads VSPTPQSSHSNIGPQPQQNPPSANGIKQQKPSLKT. Serine 442 carries the post-translational modification Phosphoserine. Serine 518 bears the Phosphoserine; by PKA mark. The segment at 551–584 is disordered; sequence DNTSIANSNGNGNDDTSNQRTEALGRKTSNGGRI. Residues 557–568 are compositionally biased toward low complexity; it reads NSNGNGNDDTSN.

The protein resides in the nucleus. Functionally, negative regulator of Ras-cAMP pathway. Involved in transcriptional regulation of galactose-inducible genes. The chain is Negative regulator of RAS-cAMP pathway (MKS1) from Saccharomyces cerevisiae (strain ATCC 204508 / S288c) (Baker's yeast).